Reading from the N-terminus, the 43-residue chain is METATLVAIFISGLLVSFTGYALYTAFGQPSEQLRDPFEEHGD.

Residues 7–27 (VAIFISGLLVSFTGYALYTAF) traverse the membrane as a helical segment.

The protein belongs to the PsbN family.

The protein localises to the plastid. The protein resides in the chloroplast thylakoid membrane. Its function is as follows. May play a role in photosystem I and II biogenesis. The chain is Protein PsbN from Sagittaria latifolia (Broadleaf arrowhead).